Reading from the N-terminus, the 255-residue chain is MNTARLNQGTPLLLNAVSKHYAENIVLNQLDLHIPAGQFVAVVGRSGGGKSTLLRLLAGLETPTAGDVLAGTTPLAEIQEDTRMMFQDARLLPWKSVIDNVGLGLKGQWRDAARRALAAVGLENRAGEWPAALSGGQKQRVALARALIHRPGLLLLDEPLGALDALTRLEMQDLIVSLWQQHGFTVLLVTHDVSEAVAMADRVLLIEEGKIGLDLTVDIPRPRRLGSVRLAELEAEVLQRVMRRGHSEQLIRRHG.

One can recognise an ABC transporter domain in the interval 12 to 233; it reads LLLNAVSKHY…RLGSVRLAEL (222 aa). An ATP-binding site is contributed by 44 to 51; that stretch reads GRSGGGKS.

It belongs to the ABC transporter superfamily. Aliphatic sulfonates importer (TC 3.A.1.17.2) family. The complex is composed of two ATP-binding proteins (SsuB), two transmembrane proteins (SsuC) and a solute-binding protein (SsuA).

The protein resides in the cell inner membrane. The catalysed reaction is ATP + H2O + aliphatic sulfonate-[sulfonate-binding protein]Side 1 = ADP + phosphate + aliphatic sulfonateSide 2 + [sulfonate-binding protein]Side 1.. Its function is as follows. Part of the ABC transporter complex SsuABC involved in aliphatic sulfonates import. Responsible for energy coupling to the transport system. The chain is Aliphatic sulfonates import ATP-binding protein SsuB from Shigella sonnei (strain Ss046).